Reading from the N-terminus, the 155-residue chain is MTEEATTTLSSADIIEIMKLLPHRYPFLMVDKIIEIDGDNAAIGIKNVTVNEPHFTGHFPESPIMPGVLLIEGMAQTAGAICAKKEGQPGNLVYFMTIENARFRKPVVPGDRVEFHVKKHKQRGNIWKFHCDAKVEGALVAEADIGAMIVRKDQA.

Residue histidine 58 is part of the active site.

It belongs to the thioester dehydratase family. FabZ subfamily.

It is found in the cytoplasm. It carries out the reaction a (3R)-hydroxyacyl-[ACP] = a (2E)-enoyl-[ACP] + H2O. In terms of biological role, involved in unsaturated fatty acids biosynthesis. Catalyzes the dehydration of short chain beta-hydroxyacyl-ACPs and long chain saturated and unsaturated beta-hydroxyacyl-ACPs. This chain is 3-hydroxyacyl-[acyl-carrier-protein] dehydratase FabZ, found in Rhizobium etli (strain CIAT 652).